The following is a 233-amino-acid chain: Uracil-DNA glycosylase (233 aa).

Asp70 functions as the Proton acceptor in the catalytic mechanism.

Belongs to the uracil-DNA glycosylase (UDG) superfamily. UNG family.

It localises to the cytoplasm. It carries out the reaction Hydrolyzes single-stranded DNA or mismatched double-stranded DNA and polynucleotides, releasing free uracil.. Excises uracil residues from the DNA which can arise as a result of misincorporation of dUMP residues by DNA polymerase or due to deamination of cytosine. In Helicobacter pylori (strain P12), this protein is Uracil-DNA glycosylase.